A 261-amino-acid polypeptide reads, in one-letter code: Cytochrome c oxidase subunit 3 (261 aa).

Residues 1–15 (MTHQTHAYHMVNPSP) are Mitochondrial matrix-facing. A helical membrane pass occupies residues 16–34 (WPLTGALSALLMTSGLAMW). The Mitochondrial intermembrane segment spans residues 35-40 (FHFNST). A helical membrane pass occupies residues 41–66 (LLLAMGLLTNILTMYQWWRDIIREST). Residues 67-72 (FQGHHT) lie on the Mitochondrial matrix side of the membrane. The helical transmembrane segment at 73–105 (SIVQKGLRYGMILFIISEVFFFSGFFWAFYHSS) threads the bilayer. The Mitochondrial intermembrane segment spans residues 106–128 (LAPTPELGGCWPPTGIHPLNPLE). A helical membrane pass occupies residues 129-152 (VPLLNTSVLLASGVSITWAHHSLM). Topologically, residues 153–155 (EGN) are mitochondrial matrix. A helical transmembrane segment spans residues 156-183 (RKNMLQGLFITISLGVYFTLLQASEYYE). Topologically, residues 184 to 190 (ASFTISD) are mitochondrial intermembrane. A helical membrane pass occupies residues 191–223 (GVYGSTFFVATGFHGLHVIIGSTFLIVCFLRQL). Residues 224–232 (KFHFTSSHH) lie on the Mitochondrial matrix side of the membrane. Residues 233–256 (FGFEAAAWYWHFVDVVWLFLYVSI) traverse the membrane as a helical segment. The Mitochondrial intermembrane segment spans residues 257–261 (YWWGS).

It belongs to the cytochrome c oxidase subunit 3 family. In terms of assembly, component of the cytochrome c oxidase (complex IV, CIV), a multisubunit enzyme composed of 14 subunits. The complex is composed of a catalytic core of 3 subunits MT-CO1, MT-CO2 and MT-CO3, encoded in the mitochondrial DNA, and 11 supernumerary subunits COX4I, COX5A, COX5B, COX6A, COX6B, COX6C, COX7A, COX7B, COX7C, COX8 and NDUFA4, which are encoded in the nuclear genome. The complex exists as a monomer or a dimer and forms supercomplexes (SCs) in the inner mitochondrial membrane with NADH-ubiquinone oxidoreductase (complex I, CI) and ubiquinol-cytochrome c oxidoreductase (cytochrome b-c1 complex, complex III, CIII), resulting in different assemblies (supercomplex SCI(1)III(2)IV(1) and megacomplex MCI(2)III(2)IV(2)).

It is found in the mitochondrion inner membrane. The catalysed reaction is 4 Fe(II)-[cytochrome c] + O2 + 8 H(+)(in) = 4 Fe(III)-[cytochrome c] + 2 H2O + 4 H(+)(out). In terms of biological role, component of the cytochrome c oxidase, the last enzyme in the mitochondrial electron transport chain which drives oxidative phosphorylation. The respiratory chain contains 3 multisubunit complexes succinate dehydrogenase (complex II, CII), ubiquinol-cytochrome c oxidoreductase (cytochrome b-c1 complex, complex III, CIII) and cytochrome c oxidase (complex IV, CIV), that cooperate to transfer electrons derived from NADH and succinate to molecular oxygen, creating an electrochemical gradient over the inner membrane that drives transmembrane transport and the ATP synthase. Cytochrome c oxidase is the component of the respiratory chain that catalyzes the reduction of oxygen to water. Electrons originating from reduced cytochrome c in the intermembrane space (IMS) are transferred via the dinuclear copper A center (CU(A)) of subunit 2 and heme A of subunit 1 to the active site in subunit 1, a binuclear center (BNC) formed by heme A3 and copper B (CU(B)). The BNC reduces molecular oxygen to 2 water molecules using 4 electrons from cytochrome c in the IMS and 4 protons from the mitochondrial matrix. The polypeptide is Cytochrome c oxidase subunit 3 (MT-CO3) (Equus caballus (Horse)).